The sequence spans 141 residues: Nucleoside triphosphatase NudI (141 aa).

Residues M1 to L141 form the Nudix hydrolase domain. The Nudix box motif lies at G38–G59.

This sequence belongs to the Nudix hydrolase family. NudI subfamily. In terms of assembly, monomer. Requires Mg(2+) as cofactor.

It catalyses the reaction a ribonucleoside 5'-triphosphate + H2O = a ribonucleoside 5'-phosphate + diphosphate + H(+). The enzyme catalyses a 2'-deoxyribonucleoside 5'-triphosphate + H2O = a 2'-deoxyribonucleoside 5'-phosphate + diphosphate + H(+). The catalysed reaction is dUTP + H2O = dUMP + diphosphate + H(+). It carries out the reaction dTTP + H2O = dTMP + diphosphate + H(+). It catalyses the reaction dCTP + H2O = dCMP + diphosphate + H(+). Catalyzes the hydrolysis of nucleoside triphosphates, with a preference for pyrimidine deoxynucleoside triphosphates (dUTP, dTTP and dCTP). The polypeptide is Nucleoside triphosphatase NudI (Klebsiella pneumoniae (strain 342)).